We begin with the raw amino-acid sequence, 460 residues long: MQSIILIGKPNVGKSSLFNRMARQRIAITSDISGTTRDTNKTQIHIHSKKAMLIDSGGLDESDELFKNVKKNTLKVAKESDIILYLVDGKLAPDDEDRQFFYSLKKLGKPIALVVNKVDNKKDEERAWEFANFGVKEIFNLSVTHNVGLDELYEWLEKFLHEEFLIPDEEENLEDFLEHYEEGKEFQFKEVDQNHIRVGIVGRVNVGKSSLLNALVKQERSVVSSIAGTTIDPVNESVVHKDKVIEFVDTAGIRKRGKIQGLERFALNRTEKILSHSQIALLVLDAHEGFNELDERIAGLVAKHYLGVIIVLNKWDKSEMDFDKTVKELHLDRFKFLAYAPVISVSALSGKRVHVLLDKILQIFENFTQKIQTSKLNTLIENATRSHPLPHDYGKLVKIYYAVQYDLAPPKIALIMNRPKALHFSYKRYLQNQIRKEFNFEGVPLVIASRKKGSKENDES.

EngA-type G domains follow at residues 2–164 (QSII…HEEF) and 196–368 (IRVG…ENFT). Residues 8-15 (GKPNVGKS), 55-59 (DSGGL), 116-119 (NKVD), 202-209 (GRVNVGKS), 249-253 (DTAGI), and 313-316 (NKWD) contribute to the GTP site. Positions 369–453 (QKIQTSKLNT…PLVIASRKKG (85 aa)) constitute a KH-like domain.

This sequence belongs to the TRAFAC class TrmE-Era-EngA-EngB-Septin-like GTPase superfamily. EngA (Der) GTPase family. As to quaternary structure, associates with the 50S ribosomal subunit.

Its function is as follows. GTPase that plays an essential role in the late steps of ribosome biogenesis. This chain is GTPase Der, found in Campylobacter jejuni subsp. jejuni serotype O:6 (strain 81116 / NCTC 11828).